The sequence spans 636 residues: Chaperone protein HtpG (636 aa).

An a; substrate-binding region spans residues 1 to 344; that stretch reads MTMSVETQKE…SNDLSLNVSR (344 aa). Positions 345–561 are b; the sequence is EILQKDPIID…EQDLGMQMRQ (217 aa). A c region spans residues 562–636; sequence ILEASGQKVP…LNKLLVELSV (75 aa).

The protein belongs to the heat shock protein 90 family. As to quaternary structure, homodimer.

It localises to the cytoplasm. In terms of biological role, molecular chaperone. Has ATPase activity. In Pseudomonas fluorescens (strain SBW25), this protein is Chaperone protein HtpG.